A 456-amino-acid chain; its full sequence is Serine--tRNA ligase (456 aa).

Disordered stretches follow at residues 107 to 130 (PHSS…GTPP) and 229 to 253 (FLEN…QDDD). Basic and acidic residues predominate over residues 114–125 (GRSESDNREVRR). The span at 239–248 (LPSNSNSPQG) shows a compositional bias: polar residues. Residue 260–262 (TSE) coordinates L-serine. Residue 291–293 (RSE) participates in ATP binding. L-serine is bound at residue Glu314. Residue 378–381 (EISS) coordinates ATP. L-serine is bound at residue Ser413.

This sequence belongs to the class-II aminoacyl-tRNA synthetase family. Type-1 seryl-tRNA synthetase subfamily. Homodimer. The tRNA molecule binds across the dimer.

The protein resides in the cytoplasm. The catalysed reaction is tRNA(Ser) + L-serine + ATP = L-seryl-tRNA(Ser) + AMP + diphosphate + H(+). The enzyme catalyses tRNA(Sec) + L-serine + ATP = L-seryl-tRNA(Sec) + AMP + diphosphate + H(+). It functions in the pathway aminoacyl-tRNA biosynthesis; selenocysteinyl-tRNA(Sec) biosynthesis; L-seryl-tRNA(Sec) from L-serine and tRNA(Sec): step 1/1. Its function is as follows. Catalyzes the attachment of serine to tRNA(Ser). Is also able to aminoacylate tRNA(Sec) with serine, to form the misacylated tRNA L-seryl-tRNA(Sec), which will be further converted into selenocysteinyl-tRNA(Sec). The sequence is that of Serine--tRNA ligase from Nitrosospira multiformis (strain ATCC 25196 / NCIMB 11849 / C 71).